The sequence spans 270 residues: MGIVEEAHNVKILGSGEQTVVLAHGFGTDQSVWKHLVPHLVDDYKVVIFDNMGAGTTNPDYFDFERYSTLEGYAYDVIAILEEFQVGSCIYVGHSVSAMIGVIASIARPDLFTKLVTVSASPRYLNDMDYYGGFEQEDLDQLYEAMRSNYKAWCSGFAPLVIGGDMDSVAIQEFSRTLFNMRPDIALSVLQMIFQSDLRHLLPHVSVPCHIIQSMKDLAVPVVVSEYLHQNLGGGSIVEVMSTEGHLPQLSSPDVVIPVLLRHIHHDIAI.

S95 acts as the Nucleophile in catalysis. Residues D217 and H246 contribute to the active site.

The protein belongs to the AB hydrolase superfamily. In terms of tissue distribution, expressed in stigma.

It is found in the nucleus. It localises to the cytoplasm. Hydrolase which may be involved in plant olfaction during volatile communication. The polypeptide is Karrikin insensitive 2 receptor CA (Petunia hybrida (Petunia)).